We begin with the raw amino-acid sequence, 383 residues long: Succinyl-diaminopimelate desuccinylase (383 aa).

Residue His72 participates in Zn(2+) binding. Asp74 is an active-site residue. A Zn(2+)-binding site is contributed by Asp105. The active-site Proton acceptor is Glu137. The Zn(2+) site is built by Glu138, Glu167, and His352.

The protein belongs to the peptidase M20A family. DapE subfamily. In terms of assembly, homodimer. Zn(2+) is required as a cofactor. Requires Co(2+) as cofactor.

It carries out the reaction N-succinyl-(2S,6S)-2,6-diaminopimelate + H2O = (2S,6S)-2,6-diaminopimelate + succinate. It participates in amino-acid biosynthesis; L-lysine biosynthesis via DAP pathway; LL-2,6-diaminopimelate from (S)-tetrahydrodipicolinate (succinylase route): step 3/3. Its function is as follows. Catalyzes the hydrolysis of N-succinyl-L,L-diaminopimelic acid (SDAP), forming succinate and LL-2,6-diaminopimelate (DAP), an intermediate involved in the bacterial biosynthesis of lysine and meso-diaminopimelic acid, an essential component of bacterial cell walls. This chain is Succinyl-diaminopimelate desuccinylase, found in Ehrlichia ruminantium (strain Gardel).